The primary structure comprises 161 residues: MPSFDVVCEANMIEVKNAIEQSNKEISTRFDFKGSDARVEHKENEITAYADDDFKLGQVKDVLLSKMAKRNVDVRFLDHGKIEKIGGDKVKQVIKIKKGVSGDLSKKIVRLVKDSKIKVQASIQGDAVRITGGKRDDLQSVIAMLRKDVTDTPLDFNNFRD.

It belongs to the YajQ family.

In terms of biological role, nucleotide-binding protein. This Paraburkholderia phytofirmans (strain DSM 17436 / LMG 22146 / PsJN) (Burkholderia phytofirmans) protein is Nucleotide-binding protein Bphyt_3208.